We begin with the raw amino-acid sequence, 600 residues long: L-galactono-1,4-lactone dehydrogenase, mitochondrial (600 aa).

Residues 1 to 25 (MLRSLLLRRSNARSLRPPFPPLRTL) constitute a mitochondrion transit peptide. Residues 16 to 51 (RPPFPPLRTLCTSGQTLTPAPPPPPPPPPPISSSAS) are disordered. The propeptide at 26-91 (CTSGQTLTPA…AKHKKAQIFR (66 aa)) is removed in mature form. Positions 34-46 (PAPPPPPPPPPPI) are enriched in pro residues. The helical transmembrane segment at 58–74 (YAGYAALALFSGAATYF) threads the bilayer. The region spanning 108 to 279 (THEVQTRNFN…AEVTLQCVER (172 aa)) is the FAD-binding PCMH-type domain.

FAD serves as cofactor.

It localises to the mitochondrion membrane. The enzyme catalyses L-galactono-1,4-lactone + 4 Fe(III)-[cytochrome c] = L-dehydroascorbate + 4 Fe(II)-[cytochrome c] + 5 H(+). The protein operates within cofactor biosynthesis; L-ascorbate biosynthesis. Inhibited by sulfhydryl-modifying agents such as N-ethylmaleimide, monoiodoacetic acid and p-hydroxymercuribenzoic acid. No inhibition by riboflavin and lycorine. Its function is as follows. Involved in the biosynthesis of ascorbic acid. Uses L-galactono-1,4-lactone as substrate, but not L-gulono-1,4-lactone, D-galactono-1,4-lactone, D-gulono-1,4-lactone, D-erythronic-1,4-lactone, D-xylonic-1,4-lactone, L-mannono-1,4-lactone, D-galactonic acid, D-glucuronic acid or D-gluconic acid. FAD, NAD, NADP and O(2) cannot act as electron acceptor. This chain is L-galactono-1,4-lactone dehydrogenase, mitochondrial, found in Brassica oleracea (Wild cabbage).